Reading from the N-terminus, the 314-residue chain is DNA-directed RNA polymerase subunit alpha (314 aa).

The interval 1–228 is alpha N-terminal domain (alpha-NTD); the sequence is MIEIEKPKIE…EHLNIFVGLT (228 aa). Residues 245–314 are alpha C-terminal domain (alpha-CTD); that stretch reads KEKVLEMTIE…ELGLGLRKDD (70 aa).

The protein belongs to the RNA polymerase alpha chain family. As to quaternary structure, homodimer. RNAP is composed of a core of 2 alpha, a beta and a beta' subunit. The core is associated with a delta subunit, and at least one of epsilon or omega. When a sigma factor is associated with the core the holoenzyme is formed, which can initiate transcription.

The catalysed reaction is RNA(n) + a ribonucleoside 5'-triphosphate = RNA(n+1) + diphosphate. DNA-dependent RNA polymerase catalyzes the transcription of DNA into RNA using the four ribonucleoside triphosphates as substrates. This is DNA-directed RNA polymerase subunit alpha from Bacillus subtilis (strain 168).